A 431-amino-acid chain; its full sequence is Glutamyl-tRNA(Gln) amidotransferase subunit A (431 aa).

Residues Lys55 and Ser130 each act as charge relay system in the active site. Ser154 acts as the Acyl-ester intermediate in catalysis.

Belongs to the amidase family. GatA subfamily. Heterotrimer of A, B and C subunits.

The enzyme catalyses L-glutamyl-tRNA(Gln) + L-glutamine + ATP + H2O = L-glutaminyl-tRNA(Gln) + L-glutamate + ADP + phosphate + H(+). Its function is as follows. Allows the formation of correctly charged Gln-tRNA(Gln) through the transamidation of misacylated Glu-tRNA(Gln) in organisms which lack glutaminyl-tRNA synthetase. The reaction takes place in the presence of glutamine and ATP through an activated gamma-phospho-Glu-tRNA(Gln). The chain is Glutamyl-tRNA(Gln) amidotransferase subunit A from Methanococcus maripaludis (strain C7 / ATCC BAA-1331).